The sequence spans 286 residues: DegV domain-containing protein SPs1668 (286 aa).

Positions 3-282 constitute a DegV domain; it reads FTIMTDSTAD…PNTLAVFVIG (280 aa). Hexadecanoate-binding residues include threonine 62 and serine 94.

In terms of biological role, may bind long-chain fatty acids, such as palmitate, and may play a role in lipid transport or fatty acid metabolism. The protein is DegV domain-containing protein SPs1668 of Streptococcus pyogenes serotype M3 (strain SSI-1).